The primary structure comprises 1184 residues: Protein stu1 (1184 aa).

HEAT repeat units follow at residues 92-130 and 162-194; these read FCPVLLERLGDHKERVRAQAAQIFTDLWPAASADVEHYV and RSYVPSVVSCLEDADSFVRHTAKSTVVELFQGA. Composition is skewed to basic and acidic residues over residues 229-240 and 308-317; these read SSTARPRSRVEP and EAEKAPHMET. A disordered region spans residues 229-336; sequence SSTARPRSRV…APQPLHAETS (108 aa). One copy of the HEAT 3 repeat lies at 463–499; it reads VTYTPRLLQHVTSACQDKNAQLRLFAAGWLKTLLNKQ. 2 disordered regions span residues 564-584 and 602-906; these read LEKDPANPNRDQSSYLSSDTL and ARLA…RVEE. A compositionally biased stretch (polar residues) spans 572 to 584; it reads NRDQSSYLSSDTL. Over residues 640–649 the composition is skewed to low complexity; sequence APLSSLSSAP. A compositionally biased stretch (polar residues) spans 723-737; the sequence is SASNENETQVATQVA. Composition is skewed to basic and acidic residues over residues 787 to 811 and 882 to 895; these read AGRHDDHAPCEISFDKLDRHDENKL and EQDRRVEKTIDSAE.

It belongs to the CLASP family. Interacts with microtubules.

The protein localises to the cytoplasm. It localises to the cytoskeleton. It is found in the nucleus. The protein resides in the spindle. Functionally, microtubule binding protein that promotes the stabilization of dynamic microtubules. Required for mitotic spindle formation. In Aspergillus oryzae (strain ATCC 42149 / RIB 40) (Yellow koji mold), this protein is Protein stu1 (stu1).